The following is a 55-amino-acid chain: MFNMALVFFLIAVLAGILGFAGIAGTLAWAAKVLFFAGLILTVVFYLLGKRTPPV.

The next 2 helical transmembrane spans lie at 4–24 (MALV…AGIA) and 27–47 (LAWA…VFYL).

The protein belongs to the UPF0391 family.

Its subcellular location is the cell membrane. This chain is UPF0391 membrane protein NE1120, found in Nitrosomonas europaea (strain ATCC 19718 / CIP 103999 / KCTC 2705 / NBRC 14298).